Reading from the N-terminus, the 431-residue chain is Trigger factor (431 aa).

Residues 161-245 (TDIVIGDVQK…VKEIKRMELP (85 aa)) form the PPIase FKBP-type domain.

It belongs to the FKBP-type PPIase family. Tig subfamily.

The protein resides in the cytoplasm. The enzyme catalyses [protein]-peptidylproline (omega=180) = [protein]-peptidylproline (omega=0). Functionally, involved in protein export. Acts as a chaperone by maintaining the newly synthesized protein in an open conformation. Functions as a peptidyl-prolyl cis-trans isomerase. This Chloroherpeton thalassium (strain ATCC 35110 / GB-78) protein is Trigger factor.